A 334-amino-acid polypeptide reads, in one-letter code: Cytoskeleton protein RodZ (334 aa).

At M1–G111 the chain is on the cytoplasmic side. The region spanning L19 to L71 is the HTH cro/C1-type domain. The H-T-H motif DNA-binding region spans Q30 to E49. Residues W112–W132 traverse the membrane as a helical; Signal-anchor for type II membrane protein segment. Residues W133–Q334 lie on the Periplasmic side of the membrane. A disordered region spans residues N155 to G241. The segment covering G161–D175 has biased composition (polar residues). Composition is skewed to low complexity over residues T176 to A211 and T219 to G241.

This sequence belongs to the RodZ family.

Its subcellular location is the cell inner membrane. Functionally, cytoskeletal protein that is involved in cell-shape control through regulation of the length of the long axis. This chain is Cytoskeleton protein RodZ, found in Salmonella dublin (strain CT_02021853).